We begin with the raw amino-acid sequence, 510 residues long: Ribose import ATP-binding protein RbsA 1 (510 aa).

ABC transporter domains are found at residues 20–256 and 266–510; these read LEMR…VGRD and VTLG…TGNA. 52 to 59 contacts ATP; the sequence is GENGAGKS.

The protein belongs to the ABC transporter superfamily. Ribose importer (TC 3.A.1.2.1) family. The complex is composed of an ATP-binding protein (RbsA), two transmembrane proteins (RbsC) and a solute-binding protein (RbsB).

It is found in the cell inner membrane. The enzyme catalyses D-ribose(out) + ATP + H2O = D-ribose(in) + ADP + phosphate + H(+). Functionally, part of the ABC transporter complex RbsABC involved in ribose import. Responsible for energy coupling to the transport system. The polypeptide is Ribose import ATP-binding protein RbsA 1 (Agrobacterium fabrum (strain C58 / ATCC 33970) (Agrobacterium tumefaciens (strain C58))).